The following is a 285-amino-acid chain: Ribose-phosphate pyrophosphokinase (285 aa).

Residues 34-36 (DGE) and 91-92 (RQ) each bind ATP. Positions 124 and 162 each coordinate Mg(2+). The active site involves Lys-185. Residues Arg-187, Asp-211, and 215-219 (STGGT) contribute to the D-ribose 5-phosphate site.

Belongs to the ribose-phosphate pyrophosphokinase family. Class III (archaeal) subfamily. Requires Mg(2+) as cofactor.

It is found in the cytoplasm. It catalyses the reaction D-ribose 5-phosphate + ATP = 5-phospho-alpha-D-ribose 1-diphosphate + AMP + H(+). It functions in the pathway metabolic intermediate biosynthesis; 5-phospho-alpha-D-ribose 1-diphosphate biosynthesis; 5-phospho-alpha-D-ribose 1-diphosphate from D-ribose 5-phosphate (route I): step 1/1. Its function is as follows. Involved in the biosynthesis of the central metabolite phospho-alpha-D-ribosyl-1-pyrophosphate (PRPP) via the transfer of pyrophosphoryl group from ATP to 1-hydroxyl of ribose-5-phosphate (Rib-5-P). The protein is Ribose-phosphate pyrophosphokinase of Pyrococcus abyssi (strain GE5 / Orsay).